Reading from the N-terminus, the 899-residue chain is Translation initiation factor IF-2 (899 aa).

Disordered regions lie at residues 115 to 137, 170 to 189, and 262 to 309; these read EAKA…LQTE, RGGG…EQKK, and DREI…HGFE. The tr-type G domain occupies 399-568; the sequence is TRPPVVTIMG…LIQSELMELK (170 aa). The interval 408–415 is G1; sequence GHVDHGKT. A GTP-binding site is contributed by 408–415; that stretch reads GHVDHGKT. The interval 433-437 is G2; it reads GITQH. Residues 454 to 457 are G3; sequence DTPG. GTP contacts are provided by residues 454-458 and 508-511; these read DTPGH and NKMD. Positions 508-511 are G4; the sequence is NKMD. The G5 stretch occupies residues 544–546; the sequence is SAH.

The protein belongs to the TRAFAC class translation factor GTPase superfamily. Classic translation factor GTPase family. IF-2 subfamily.

The protein localises to the cytoplasm. In terms of biological role, one of the essential components for the initiation of protein synthesis. Protects formylmethionyl-tRNA from spontaneous hydrolysis and promotes its binding to the 30S ribosomal subunits. Also involved in the hydrolysis of GTP during the formation of the 70S ribosomal complex. This is Translation initiation factor IF-2 from Acinetobacter baumannii (strain SDF).